We begin with the raw amino-acid sequence, 448 residues long: Tubulin alpha-5 chain (448 aa).

An MREC motif motif is present at residues 1-4 (MREC). Residue glutamine 11 coordinates GTP. Lysine 40 is modified (N6-acetyllysine). Residues glutamate 71, serine 140, glycine 144, threonine 145, threonine 179, asparagine 206, and asparagine 228 each contribute to the GTP site. Glutamate 71 lines the Mg(2+) pocket. The active site involves glutamate 254.

This sequence belongs to the tubulin family. Dimer of alpha and beta chains. A typical microtubule is a hollow water-filled tube with an outer diameter of 25 nm and an inner diameter of 15 nM. Alpha-beta heterodimers associate head-to-tail to form protofilaments running lengthwise along the microtubule wall with the beta-tubulin subunit facing the microtubule plus end conferring a structural polarity. Microtubules usually have 13 protofilaments but different protofilament numbers can be found in some organisms and specialized cells. Mg(2+) is required as a cofactor. Some glutamate residues at the C-terminus are polyglycylated, resulting in polyglycine chains on the gamma-carboxyl group. Glycylation is mainly limited to tubulin incorporated into axonemes (cilia and flagella) whereas glutamylation is prevalent in neuronal cells, centrioles, axonemes, and the mitotic spindle. Both modifications can coexist on the same protein on adjacent residues, and lowering polyglycylation levels increases polyglutamylation, and reciprocally. The precise function of polyglycylation is still unclear. Post-translationally, some glutamate residues at the C-terminus are polyglutamylated, resulting in polyglutamate chains on the gamma-carboxyl group. Polyglutamylation plays a key role in microtubule severing by spastin (SPAST). SPAST preferentially recognizes and acts on microtubules decorated with short polyglutamate tails: severing activity by SPAST increases as the number of glutamates per tubulin rises from one to eight, but decreases beyond this glutamylation threshold. In terms of processing, acetylation of alpha chains at Lys-40 is located inside the microtubule lumen. This modification has been correlated with increased microtubule stability, intracellular transport and ciliary assembly.

Its subcellular location is the cytoplasm. The protein localises to the cytoskeleton. It catalyses the reaction GTP + H2O = GDP + phosphate + H(+). Its function is as follows. Tubulin is the major constituent of microtubules, a cylinder consisting of laterally associated linear protofilaments composed of alpha- and beta-tubulin heterodimers. Microtubules grow by the addition of GTP-tubulin dimers to the microtubule end, where a stabilizing cap forms. Below the cap, tubulin dimers are in GDP-bound state, owing to GTPase activity of alpha-tubulin. The polypeptide is Tubulin alpha-5 chain (Gallus gallus (Chicken)).